The sequence spans 469 residues: ATP synthase subunit beta (469 aa).

An ATP-binding site is contributed by 155 to 162 (GGAGVGKT).

This sequence belongs to the ATPase alpha/beta chains family. F-type ATPases have 2 components, CF(1) - the catalytic core - and CF(0) - the membrane proton channel. CF(1) has five subunits: alpha(3), beta(3), gamma(1), delta(1), epsilon(1). CF(0) has three main subunits: a(1), b(2) and c(9-12). The alpha and beta chains form an alternating ring which encloses part of the gamma chain. CF(1) is attached to CF(0) by a central stalk formed by the gamma and epsilon chains, while a peripheral stalk is formed by the delta and b chains.

It is found in the cell inner membrane. The enzyme catalyses ATP + H2O + 4 H(+)(in) = ADP + phosphate + 5 H(+)(out). Its function is as follows. Produces ATP from ADP in the presence of a proton gradient across the membrane. The catalytic sites are hosted primarily by the beta subunits. The chain is ATP synthase subunit beta from Helicobacter pylori (strain ATCC 700392 / 26695) (Campylobacter pylori).